Reading from the N-terminus, the 184-residue chain is Protein C8 (184 aa).

Residues 1–21 (MSSIRFIACLYLISIFGNCHE) form the signal peptide.

Belongs to the poxviridae C8 protein family.

In Vaccinia virus (strain Copenhagen) (VACV), this protein is Protein C8.